Reading from the N-terminus, the 503-residue chain is Glutamate/gamma-aminobutyrate antiporter (503 aa).

An L-glutamate-binding site is contributed by leucine 33–glycine 43. The next 7 membrane-spanning stretches (helical) occupy residues leucine 35–alanine 55, phenylalanine 153–isoleucine 173, valine 194–alanine 214, isoleucine 232–valine 252, leucine 366–isoleucine 386, isoleucine 407–proline 427, and methionine 440–histidine 460.

The protein belongs to the amino acid-polyamine-organocation (APC) superfamily. Glutamate:GABA antiporter (GGA) (TC 2.A.3.7) family.

The protein resides in the cell membrane. The enzyme catalyses 4-aminobutanoate(in) + L-glutamate(out) = 4-aminobutanoate(out) + L-glutamate(in). Its function is as follows. Involved in glutaminase-dependent acid resistance. Exchanges extracellular glutamate (Glu) for intracellular gamma-aminobutyric acid (GABA) under acidic conditions. The polypeptide is Glutamate/gamma-aminobutyrate antiporter (gadC) (Lactococcus lactis subsp. lactis (strain IL1403) (Streptococcus lactis)).